Consider the following 208-residue polypeptide: Large ribosomal subunit protein uL4 (208 aa).

Positions 44–76 are disordered; that stretch reads RRQGTQSTKTKSEVRGGGRKPWRQKGTGRARHG. Over residues 60 to 76 the composition is skewed to basic residues; it reads GGRKPWRQKGTGRARHG.

Belongs to the universal ribosomal protein uL4 family. Part of the 50S ribosomal subunit.

Functionally, one of the primary rRNA binding proteins, this protein initially binds near the 5'-end of the 23S rRNA. It is important during the early stages of 50S assembly. It makes multiple contacts with different domains of the 23S rRNA in the assembled 50S subunit and ribosome. Forms part of the polypeptide exit tunnel. The polypeptide is Large ribosomal subunit protein uL4 (Acetivibrio thermocellus (strain ATCC 27405 / DSM 1237 / JCM 9322 / NBRC 103400 / NCIMB 10682 / NRRL B-4536 / VPI 7372) (Clostridium thermocellum)).